Consider the following 254-residue polypeptide: Ribosomal protein L11 methyltransferase (254 aa).

Residues Thr107, Gly128, Asp149, Ser175, and Asn191 each coordinate S-adenosyl-L-methionine.

This sequence belongs to the methyltransferase superfamily. PrmA family.

The protein resides in the cytoplasm. The catalysed reaction is L-lysyl-[protein] + 3 S-adenosyl-L-methionine = N(6),N(6),N(6)-trimethyl-L-lysyl-[protein] + 3 S-adenosyl-L-homocysteine + 3 H(+). The enzyme catalyses an N-terminal L-alpha-aminoacyl-[protein] + 3 S-adenosyl-L-methionine = an N-terminal trimethyl-L-alpha-aminoacyl-[protein] + 3 S-adenosyl-L-homocysteine + 3 H(+). Its function is as follows. Methylates ribosomal protein L11. Preferentially recognizes free L11 before its incorporation into 50S subunits. This function is dispensable for growth and thermostability. This chain is Ribosomal protein L11 methyltransferase, found in Thermus thermophilus (strain ATCC 27634 / DSM 579 / HB8).